The chain runs to 170 residues: Transmembrane protein 217B (170 aa).

A signal peptide spans 1–21 (MNVRMFSLMVGIFSVLNTTQF). The Lumenal portion of the chain corresponds to 22 to 58 (FIFDLNQKTHICYEAKFSIYVDSKSELVTWTLFHRAN). The helical transmembrane segment at 59–79 (ISTGLSLTTIIIGCFLFYCIH) threads the bilayer. At 80 to 85 (KNIYMG) the chain is on the cytoplasmic side. The helical transmembrane segment at 86-106 (LLIYAMWIITYELINFSIVLL) threads the bilayer. The Lumenal portion of the chain corresponds to 107 to 120 (LNGIIKDHFKTLSY). The chain crosses the membrane as a helical span at residues 121-141 (LHWIFQISHMLLHFFCLPFIV). Over 142–170 (KHAYNLYKESQTVGRKRRHRLCSTIAVNS) the chain is Cytoplasmic.

The protein localises to the membrane. The sequence is that of Transmembrane protein 217B from Homo sapiens (Human).